The following is a 272-amino-acid chain: Ribosomal RNA small subunit methyltransferase A (272 aa).

Residues His-10, Leu-12, Gly-37, Glu-57, Asp-82, and Asn-98 each contribute to the S-adenosyl-L-methionine site.

The protein belongs to the class I-like SAM-binding methyltransferase superfamily. rRNA adenine N(6)-methyltransferase family. RsmA subfamily.

It localises to the cytoplasm. It carries out the reaction adenosine(1518)/adenosine(1519) in 16S rRNA + 4 S-adenosyl-L-methionine = N(6)-dimethyladenosine(1518)/N(6)-dimethyladenosine(1519) in 16S rRNA + 4 S-adenosyl-L-homocysteine + 4 H(+). In terms of biological role, specifically dimethylates two adjacent adenosines (A1518 and A1519) in the loop of a conserved hairpin near the 3'-end of 16S rRNA in the 30S particle. May play a critical role in biogenesis of 30S subunits. In Gloeobacter violaceus (strain ATCC 29082 / PCC 7421), this protein is Ribosomal RNA small subunit methyltransferase A.